We begin with the raw amino-acid sequence, 86 residues long: Large ribosomal subunit protein bL27 (86 aa).

The disordered stretch occupies residues 1-22; sequence MAHKKAGGSTRNGRDSESKRLG.

The protein belongs to the bacterial ribosomal protein bL27 family.

This chain is Large ribosomal subunit protein bL27, found in Vibrio cholerae serotype O1 (strain ATCC 39315 / El Tor Inaba N16961).